Consider the following 634-residue polypeptide: Growth hormone receptor (634 aa).

The signal sequence occupies residues 1–18; that stretch reads MDLWQLLLTLAVAGSSDA. At 19 to 260 the chain is on the extracellular side; that stretch reads FSGSEATPAF…NPSACEEDFQ (242 aa). A glycan (N-linked (GlcNAc...) asparagine) is linked at N46. A disulfide bond links C56 and C66. N73 carries N-linked (GlcNAc...) asparagine glycosylation. An intrachain disulfide couples C97 to C108. An N-linked (GlcNAc...) asparagine glycan is attached at N111. An intrachain disulfide couples C122 to C136. In terms of domain architecture, Fibronectin type-III spans 147–250; that stretch reads PPVGLNWTLL…EVLLITFPQM (104 aa). Residues N152, N157, and N196 are each glycosylated (N-linked (GlcNAc...) asparagine). Positions 236-240 match the WSXWS motif motif; it reads YGKFS. Residues 261-284 form a helical membrane-spanning segment; the sequence is FPWFLIIIFGILGLTVTLFLLIFS. Topologically, residues 285-634 are cytoplasmic; the sequence is KQQRIKMLIL…STDQLNKIMP (350 aa). Residues 290 to 375 are required for JAK2 binding; it reads KMLILPPVPV…HEKSLSIFGA (86 aa). The short motif at 293–301 is the Box 1 motif element; it reads ILPPVPVPK. A UbE motif motif is present at residues 336–345; the sequence is DSWVEFIELD. Phosphoserine is present on S337. Residues 451–471 are disordered; it reads KPRPLPIGGTESTHQAVHTQL. Positions 460–471 are enriched in polar residues; sequence TESTHQAVHTQL. Residues Y483 and Y591 each carry the phosphotyrosine modification.

Belongs to the type I cytokine receptor family. Type 1 subfamily. On growth hormone (GH) binding, forms homodimers and binds JAK2 via a box 1-containing domain. In terms of processing, the soluble form (GHBP) is produced by phorbol ester-promoted proteolytic cleavage at the cell surface (shedding) by ADAM17/TACE. Shedding is inhibited by growth hormone (GH) binding to the receptor probably due to a conformational change in GHR rendering the receptor inaccessible to ADAM17. Post-translationally, on GH binding, phosphorylated on tyrosine residues in the cytoplasmic domain by JAK2. Ubiquitinated by the ECS(SOCS2) complex following ligand-binding and phosphorylation by JAK2, leading to its degradation by the proteasome. Regulation by the ECS(SOCS2) complex acts as a negative feedback loop of growth hormone receptor signaling. Ubiquitination is not sufficient for GHR internalization.

The protein localises to the cell membrane. It localises to the secreted. Its function is as follows. Receptor for pituitary gland growth hormone (GH1) involved in regulating postnatal body growth. On ligand binding, couples to the JAK2/STAT5 pathway. In terms of biological role, the soluble form (GHBP) acts as a reservoir of growth hormone in plasma and may be a modulator/inhibitor of GH signaling. The polypeptide is Growth hormone receptor (GHR) (Ovis aries (Sheep)).